The sequence spans 585 residues: Clathrin heavy chain linker domain-containing protein 1 (585 aa).

Residues 118–239 (QLEAKMRIID…DLRFRHQRLQ (122 aa)) adopt a coiled-coil conformation.

In Rattus norvegicus (Rat), this protein is Clathrin heavy chain linker domain-containing protein 1 (Clhc1).